We begin with the raw amino-acid sequence, 555 residues long: CTP synthase (555 aa).

Residues 1–271 are amidoligase domain; sequence MVKRGKKTKY…DDKLAELFNI (271 aa). Position 19 (Ser19) interacts with CTP. Ser19 contributes to the UTP binding site. ATP contacts are provided by residues 20-25 and Asp77; that span reads SLGKGL. Mg(2+)-binding residues include Asp77 and Glu145. CTP-binding positions include 152 to 154, 192 to 197, and Lys228; these read DIE and KTKPTQ. Residues 192 to 197 and Lys228 contribute to the UTP site; that span reads KTKPTQ. A Glutamine amidotransferase type-1 domain is found at 297 to 537; that stretch reads RIGIVGKYVE…VKAALEHRDA (241 aa). Gly358 provides a ligand contact to L-glutamine. The active-site Nucleophile; for glutamine hydrolysis is the Cys385. L-glutamine contacts are provided by residues 386–389, Glu409, and Arg466; that span reads LGLQ. Residues His510 and Glu512 contribute to the active site. The interval 536–555 is disordered; that stretch reads DAQQRQPSAEVKKLPVGKNG.

It belongs to the CTP synthase family. Homotetramer.

The catalysed reaction is UTP + L-glutamine + ATP + H2O = CTP + L-glutamate + ADP + phosphate + 2 H(+). It carries out the reaction L-glutamine + H2O = L-glutamate + NH4(+). It catalyses the reaction UTP + NH4(+) + ATP = CTP + ADP + phosphate + 2 H(+). It participates in pyrimidine metabolism; CTP biosynthesis via de novo pathway; CTP from UDP: step 2/2. With respect to regulation, allosterically activated by GTP, when glutamine is the substrate; GTP has no effect on the reaction when ammonia is the substrate. The allosteric effector GTP functions by stabilizing the protein conformation that binds the tetrahedral intermediate(s) formed during glutamine hydrolysis. Inhibited by the product CTP, via allosteric rather than competitive inhibition. In terms of biological role, catalyzes the ATP-dependent amination of UTP to CTP with either L-glutamine or ammonia as the source of nitrogen. Regulates intracellular CTP levels through interactions with the four ribonucleotide triphosphates. This Anaeromyxobacter dehalogenans (strain 2CP-C) protein is CTP synthase.